Here is a 272-residue protein sequence, read N- to C-terminus: 1,4-dihydroxy-6-naphtoate synthase (272 aa).

Substrate contacts are provided by residues 55-57 (KLS) and 107-108 (TA). H145 functions as the Proton acceptor in the catalytic mechanism.

It belongs to the MqnA/MqnD family. MqnD subfamily.

It catalyses the reaction cyclic dehypoxanthinylfutalosinate = 1,4-dihydroxy-6-naphthoate + dihydroxyacetone. Its pathway is quinol/quinone metabolism; menaquinone biosynthesis. In terms of biological role, catalyzes the conversion of cyclic dehypoxanthine futalosine (cyclic DHFL) into 1,4-dihydroxy-6-naphthoate, a step in the biosynthesis of menaquinone (MK, vitamin K2). This chain is 1,4-dihydroxy-6-naphtoate synthase, found in Thermus thermophilus (strain ATCC 27634 / DSM 579 / HB8).